The primary structure comprises 95 residues: Phosphoribosyl-ATP pyrophosphatase (95 aa).

The protein belongs to the PRA-PH family.

Its subcellular location is the cytoplasm. The enzyme catalyses 1-(5-phospho-beta-D-ribosyl)-ATP + H2O = 1-(5-phospho-beta-D-ribosyl)-5'-AMP + diphosphate + H(+). It participates in amino-acid biosynthesis; L-histidine biosynthesis; L-histidine from 5-phospho-alpha-D-ribose 1-diphosphate: step 2/9. In Halobacterium salinarum (strain ATCC 29341 / DSM 671 / R1), this protein is Phosphoribosyl-ATP pyrophosphatase.